The primary structure comprises 138 residues: ATP synthase epsilon chain (138 aa).

Belongs to the ATPase epsilon chain family. F-type ATPases have 2 components, CF(1) - the catalytic core - and CF(0) - the membrane proton channel. CF(1) has five subunits: alpha(3), beta(3), gamma(1), delta(1), epsilon(1). CF(0) has three main subunits: a, b and c.

The protein resides in the cell membrane. Functionally, produces ATP from ADP in the presence of a proton gradient across the membrane. This chain is ATP synthase epsilon chain, found in Caldanaerobacter subterraneus subsp. tengcongensis (strain DSM 15242 / JCM 11007 / NBRC 100824 / MB4) (Thermoanaerobacter tengcongensis).